The chain runs to 168 residues: Photosystem I assembly protein Ycf3 (168 aa).

TPR repeat units follow at residues 35-68 (AFTYYRDGMSAQSEGNYAEALQNYYEATRLEIDP), 72-105 (SYILYNIGLIHTSNGEHTKALEYYFRALERNPFL), and 120-153 (GEQAIQQGDSEIAESWFDQAAEYWKQAIALTPGN).

This sequence belongs to the Ycf3 family.

It localises to the plastid. Its subcellular location is the chloroplast thylakoid membrane. Its function is as follows. Essential for the assembly of the photosystem I (PSI) complex. May act as a chaperone-like factor to guide the assembly of the PSI subunits. The sequence is that of Photosystem I assembly protein Ycf3 from Nandina domestica (Heavenly bamboo).